Consider the following 106-residue polypeptide: uncharacterized protein (106 aa).

Residues 28 to 68 (SSANEPKKLPNKKLVSTKSHTQVNREKSKNKDTYEDYSDSN) form a disordered region. Basic and acidic residues predominate over residues 50–61 (VNREKSKNKDTY).

This is an uncharacterized protein from Acanthamoeba polyphaga (Amoeba).